Reading from the N-terminus, the 131-residue chain is Profilin-2 (131 aa).

Belongs to the profilin family. In terms of assembly, occurs in many kinds of cells as a complex with monomeric actin in a 1:1 ratio.

It is found in the cytoplasm. The protein resides in the cytoskeleton. In terms of biological role, binds to actin and affects the structure of the cytoskeleton. At high concentrations, profilin prevents the polymerization of actin, whereas it enhances it at low concentrations. By binding to PIP2, it inhibits the formation of IP3 and DG. This is Profilin-2 (PRO2) from Triticum aestivum (Wheat).